The sequence spans 331 residues: Phenylalanine--tRNA ligase alpha subunit (331 aa).

E252 provides a ligand contact to Mg(2+).

The protein belongs to the class-II aminoacyl-tRNA synthetase family. Phe-tRNA synthetase alpha subunit type 1 subfamily. Tetramer of two alpha and two beta subunits. Requires Mg(2+) as cofactor.

The protein resides in the cytoplasm. The enzyme catalyses tRNA(Phe) + L-phenylalanine + ATP = L-phenylalanyl-tRNA(Phe) + AMP + diphosphate + H(+). The sequence is that of Phenylalanine--tRNA ligase alpha subunit from Xanthomonas axonopodis pv. citri (strain 306).